Consider the following 508-residue polypeptide: MQRLLAPARRVLQVKRVMQESSLSPAHLLPAAQQRFSTIPPAPLAKTDTWPKDVGILALEVYFPAQYVDQTDLEKFNNVEAGKYTVGLGQTRMGFCSVQEDINSLCLTVVQRLMERTKLPWDAVGRLEVGTETIIDKSKAVKTVLMELFQDSGNTDIEGIDTTNACYGGTASLFNAANWMESSYWDGRYALVVCGDIAVYPSGNARPTGGAGAVAMLIGPKAPLVLEQGLRGTHMENAYDFYKPNLASEYPLVDGKLSIQCYLRALDRCYAAYRRKIQNQWKQAGNNQPFTLDDVQYMIFHTPFCKMVQKSLARLMFNDFLSSSSDKQNNLYKGLEAFKGLKLEETYTNKDVDKALLKASLDMFNKKTKASLYLSTNNGNMYTSSLYGCLASLLSHHSAQELAGSRIGAFSYGSGLAASFFSFRVSKDASPGSPLEKLVSSVSDLPKRLDSRRRMSPEEFTEIMNQREQFYHKVNFSPPGDTSNLFPGTWYLERVDEMHRRKYARRPV.

A mitochondrion-targeting transit peptide spans 1–37 (MQRLLAPARRVLQVKRVMQESSLSPAHLLPAAQQRFS). Lys-52 carries the post-translational modification N6-succinyllysine. The (3S)-3-hydroxy-3-methylglutaryl-CoA site is built by Glu-80 and Ala-81. An N6-acetyllysine; alternate mark is found at Lys-83 and Lys-118. N6-succinyllysine; alternate occurs at positions 83 and 118. The Proton donor/acceptor role is filled by Glu-132. 3 residues coordinate (3S)-3-hydroxy-3-methylglutaryl-CoA: Cys-166, Asn-204, and Thr-208. Catalysis depends on Cys-166, which acts as the Acyl-thioester intermediate. Lys-221 is modified (N6-succinyllysine). Lys-243 carries the N6-acetyllysine modification. Lys-256 carries the post-translational modification N6-acetyllysine; alternate. Residue Lys-256 is modified to N6-succinyllysine; alternate. The (3S)-3-hydroxy-3-methylglutaryl-CoA site is built by Ser-258 and His-301. His-301 serves as the catalytic Proton donor/acceptor. Lys-306 is subject to N6-acetyllysine. Lys-310 is a binding site for (3S)-3-hydroxy-3-methylglutaryl-CoA. N6-acetyllysine; alternate is present on residues Lys-310 and Lys-327. 2 positions are modified to N6-succinyllysine; alternate: Lys-310 and Lys-327. An N6-succinyllysine modification is found at Lys-333. N6-acetyllysine; alternate is present on residues Lys-342, Lys-350, Lys-354, and Lys-358. N6-succinyllysine; alternate is present on residues Lys-342, Lys-350, Lys-354, and Lys-358. Residues Asn-380 and Ser-414 each coordinate (3S)-3-hydroxy-3-methylglutaryl-CoA. Lys-427 bears the N6-acetyllysine mark. Position 433 is a phosphoserine (Ser-433). Residue Lys-437 is modified to N6-acetyllysine. The residue at position 440 (Ser-440) is a Phosphoserine. Position 447 is an N6-acetyllysine; alternate (Lys-447). Residue Lys-447 is modified to N6-succinyllysine; alternate. The residue at position 456 (Ser-456) is a Phosphoserine. Position 473 is an N6-acetyllysine; alternate (Lys-473). The residue at position 473 (Lys-473) is an N6-succinyllysine; alternate. Ser-477 bears the Phosphoserine mark.

Belongs to the thiolase-like superfamily. HMG-CoA synthase family. Homodimer. In terms of processing, succinylated. Desuccinylated by SIRT5. Succinylation, at least at Lys-83 and Lys-310, inhibits the enzymatic activity. In terms of tissue distribution, liver and kidney.

It localises to the mitochondrion. The enzyme catalyses acetoacetyl-CoA + acetyl-CoA + H2O = (3S)-3-hydroxy-3-methylglutaryl-CoA + CoA + H(+). Its pathway is metabolic intermediate biosynthesis; (R)-mevalonate biosynthesis; (R)-mevalonate from acetyl-CoA: step 2/3. Its function is as follows. Catalyzes the first irreversible step in ketogenesis, condensing acetyl-CoA to acetoacetyl-CoA to form HMG-CoA, which is converted by HMG-CoA reductase (HMGCR) into mevalonate. The protein is Hydroxymethylglutaryl-CoA synthase, mitochondrial (Hmgcs2) of Rattus norvegicus (Rat).